Here is a 153-residue protein sequence, read N- to C-terminus: Transcription antitermination protein NusB (153 aa).

Belongs to the NusB family.

Its function is as follows. Involved in transcription antitermination. Required for transcription of ribosomal RNA (rRNA) genes. Binds specifically to the boxA antiterminator sequence of the ribosomal RNA (rrn) operons. This is Transcription antitermination protein NusB from Clostridium tetani (strain Massachusetts / E88).